Reading from the N-terminus, the 346-residue chain is Beta-ketoacyl-[acyl-carrier-protein] synthase III (346 aa).

Residues cysteine 120 and histidine 256 contribute to the active site. The interval 257-261 (QANIR) is ACP-binding. Asparagine 286 is a catalytic residue.

Belongs to the thiolase-like superfamily. FabH family. Homodimer.

Its subcellular location is the cytoplasm. The catalysed reaction is malonyl-[ACP] + acetyl-CoA + H(+) = 3-oxobutanoyl-[ACP] + CO2 + CoA. It participates in lipid metabolism; fatty acid biosynthesis. Its function is as follows. Catalyzes the condensation reaction of fatty acid synthesis by the addition to an acyl acceptor of two carbons from malonyl-ACP. Catalyzes the first condensation reaction which initiates fatty acid synthesis and may therefore play a role in governing the total rate of fatty acid production. Possesses both acetoacetyl-ACP synthase and acetyl transacylase activities. Its substrate specificity determines the biosynthesis of branched-chain and/or straight-chain of fatty acids. The protein is Beta-ketoacyl-[acyl-carrier-protein] synthase III of Deinococcus geothermalis (strain DSM 11300 / CIP 105573 / AG-3a).